Consider the following 861-residue polypeptide: Leucine--tRNA ligase (861 aa).

The short motif at 42–52 (PYPSGKLHMGH) is the 'HIGH' region element. Residues 620 to 624 (KMSKS) carry the 'KMSKS' region motif. K623 serves as a coordination point for ATP.

Belongs to the class-I aminoacyl-tRNA synthetase family.

The protein localises to the cytoplasm. The enzyme catalyses tRNA(Leu) + L-leucine + ATP = L-leucyl-tRNA(Leu) + AMP + diphosphate. This is Leucine--tRNA ligase from Hahella chejuensis (strain KCTC 2396).